Consider the following 210-residue polypeptide: Thymidylate kinase (210 aa).

ATP is bound at residue 10–17 (GPEGAGKS).

The protein belongs to the thymidylate kinase family.

It carries out the reaction dTMP + ATP = dTDP + ADP. In terms of biological role, phosphorylation of dTMP to form dTDP in both de novo and salvage pathways of dTTP synthesis. This chain is Thymidylate kinase, found in Pseudomonas paraeruginosa (strain DSM 24068 / PA7) (Pseudomonas aeruginosa (strain PA7)).